The following is a 138-amino-acid chain: MKGLLPLAWFLACSVPAVQGGLLDLKSMIEKVTGKNALTNYGFYGCYCGWGGRGTPKDGTDWCCWAHDHCYGRLEEKGCNIRTQSYKYRFAWGVVTCEPGPFCHVNLCACDRKLVYCLKRNLRSYNPQYQYFPNILCS.

A signal peptide spans 1 to 20; sequence MKGLLPLAWFLACSVPAVQG. 6 cysteine pairs are disulfide-bonded: cysteine 46–cysteine 137, cysteine 48–cysteine 64, cysteine 63–cysteine 117, cysteine 70–cysteine 110, cysteine 79–cysteine 103, and cysteine 97–cysteine 108. The Ca(2+) site is built by tyrosine 47, glycine 49, and glycine 51. Histidine 67 is an active-site residue. Aspartate 68 contacts Ca(2+). Aspartate 111 is an active-site residue.

It belongs to the phospholipase A2 family. Ca(2+) is required as a cofactor. In terms of processing, this enzyme lacks one of the seven disulfide bonds found in similar PLA2 proteins. Heart, placenta and less abundantly, in lung. Detected in the outer and inner plexiform layers of the retina (at protein level). Expressed in monocytes and macrophages.

The protein resides in the secreted. It is found in the cell membrane. Its subcellular location is the cytoplasmic vesicle. The protein localises to the phagosome. It localises to the recycling endosome. The protein resides in the golgi apparatus. It is found in the cis-Golgi network. Its subcellular location is the trans-Golgi network. It carries out the reaction a 1,2-diacyl-sn-glycero-3-phosphocholine + H2O = a 1-acyl-sn-glycero-3-phosphocholine + a fatty acid + H(+). It catalyses the reaction 1-hexadecanoyl-2-(9Z-octadecenoyl)-sn-glycero-3-phosphocholine + H2O = 1-hexadecanoyl-sn-glycero-3-phosphocholine + (9Z)-octadecenoate + H(+). The enzyme catalyses 1-hexadecanoyl-2-(5Z,8Z,11Z,14Z-eicosatetraenoyl)-sn-glycero-3-phosphocholine + H2O = 1-hexadecanoyl-sn-glycero-3-phosphocholine + (5Z,8Z,11Z,14Z)-eicosatetraenoate + H(+). The catalysed reaction is 1-hexadecanoyl-2-(9Z,12Z-octadecadienoyl)-sn-glycero-3-phosphoethanolamine + H2O = 1-hexadecanoyl-sn-glycero-3-phosphoethanolamine + (9Z,12Z)-octadecadienoate + H(+). It carries out the reaction 1-hexadecanoyl-2-(5Z,8Z,11Z,14Z-eicosatetraenoyl)-sn-glycero-3-phosphoethanolamine + H2O = 1-hexadecanoyl-sn-glycero-3-phosphoethanolamine + (5Z,8Z,11Z,14Z)-eicosatetraenoate + H(+). It catalyses the reaction 1-octadecanoyl-2-(5Z,8Z,11Z,14Z-eicosatetraenoyl)-sn-glycero-3-phospho-(1D-myo-inositol) + H2O = 1-octadecanoyl-sn-glycero-3-phospho-(1D-myo-inositol) + (5Z,8Z,11Z,14Z)-eicosatetraenoate + H(+). The enzyme catalyses 1-hexadecanoyl-2-(9Z-octadecenoyl)-sn-glycero-3-phosphoglycerol + H2O = 1-hexadecanoyl-sn-glycero-3-phosphoglycerol + (9Z)-octadecenoate + H(+). The catalysed reaction is N-hexadecanoyl-1,2-di-(9Z-octadecenoyl)-sn-glycero-3-phosphoethanolamine + H2O = N-hexadecanoyl-1-(9Z-octadecenoyl)-sn-glycero-3-phosphoethanolamine + (9Z)-octadecenoate + H(+). It carries out the reaction 1'-[1,2-di-(9Z-octadecenoyl)-sn-glycero-3-phospho]-3'-[1-(9Z-octadecenoyl)-sn-glycero-3-phospho]-glycerol + H2O = 1',3'-bis-[1-(9Z-octadecenoyl)-sn-glycero-3-phospho]-glycerol + (9Z)-octadecenoate + H(+). It catalyses the reaction 1',3'-bis[1,2-di-(9Z-octadecenoyl)-sn-glycero-3-phospho]-glycerol + H2O = 1'-[1,2-di-(9Z-octadecenoyl)-sn-glycero-3-phospho]-3'-[1-(9Z-octadecenoyl)-sn-glycero-3-phospho]-glycerol + (9Z)-octadecenoate + H(+). It participates in lipid metabolism; phospholipid metabolism. The protein operates within lipid metabolism; leukotriene B4 biosynthesis. It functions in the pathway lipid metabolism; leukotriene C4 biosynthesis. Its activity is regulated as follows. Activated by cardiolipin. Secretory calcium-dependent phospholipase A2 that primarily targets extracellular phospholipids. Hydrolyzes the ester bond of the fatty acyl group attached at sn-2 position of phospholipids (phospholipase A2 activity), preferentially releasing fatty acyl groups with a low degree of unsaturation such as oleoyl (C18:1) and linoleoyl (C18:2) groups. Hydrolyzes low-density lipoprotein (LDL) phospholipids releasing unsaturated fatty acids that drive macrophage polarization toward an M2 phenotype. May act in an autocrine and paracrine manner. Contributes to lipid remodeling of cellular membranes at different subcellular locations and generation of lipid mediators involved in pathogen clearance. Cleaves sn-2 fatty acyl chains of cardiolipin, a major component of the inner membrane of mitochondria and bacterial membranes. Promotes phagocytosis of bacteria in macrophages through production of lysophosphatidylethanolamines. Displays bactericidal activity against Gram-positive bacteria by directly hydrolyzing phospholipids of the bacterial membrane. Promotes phagocytosis and killing of ingested fungi likely through controlling phagosome-lysosome fusion and phagosome maturation. Plays a role in biosynthesis of cysteinyl leukotrienes (CysLTs) in myeloid cells. In eosinophils, triggers perinuclear arachidonate release and LTC4 synthesis in a PLA2G4A-independent way. In neutrophils, amplifies CysLTs biosynthesis initiated by PLA2G4A. Promotes immune complex clearance in macrophages via stimulating synthesis of CysLTs, which act through CYSLTR1 to trigger phagocytosis. May regulate antigen processing in antigen-presenting cells. In pulmonary macrophages regulates IL33 production required for activation of group 2 innate lymphoid cells. May play a role in the biosynthesis of N-acyl ethanolamines that regulate energy metabolism. Hydrolyzes N-acyl phosphatidylethanolamines to N-acyl lysophosphatidylethanolamines, which are further cleaved by a lysophospholipase D to release N-acyl ethanolamines. This is Phospholipase A2 group V (PLA2G5) from Homo sapiens (Human).